A 312-amino-acid polypeptide reads, in one-letter code: Tetraacyldisaccharide 4'-kinase (312 aa).

ATP is bound at residue 60–67; that stretch reads IAGGSGKT.

Belongs to the LpxK family.

The enzyme catalyses a lipid A disaccharide + ATP = a lipid IVA + ADP + H(+). It functions in the pathway glycolipid biosynthesis; lipid IV(A) biosynthesis; lipid IV(A) from (3R)-3-hydroxytetradecanoyl-[acyl-carrier-protein] and UDP-N-acetyl-alpha-D-glucosamine: step 6/6. Transfers the gamma-phosphate of ATP to the 4'-position of a tetraacyldisaccharide 1-phosphate intermediate (termed DS-1-P) to form tetraacyldisaccharide 1,4'-bis-phosphate (lipid IVA). This is Tetraacyldisaccharide 4'-kinase from Helicobacter pylori (strain J99 / ATCC 700824) (Campylobacter pylori J99).